The following is a 732-amino-acid chain: DNA-directed RNA polymerase subunit beta' (732 aa).

Positions 70, 72, 85, and 88 each coordinate Zn(2+). 3 residues coordinate Mg(2+): D575, D577, and D579.

Belongs to the RNA polymerase beta' chain family. RpoC1 subfamily. As to quaternary structure, in plastids the minimal PEP RNA polymerase catalytic core is composed of four subunits: alpha, beta, beta', and beta''. When a (nuclear-encoded) sigma factor is associated with the core the holoenzyme is formed, which can initiate transcription. Mg(2+) is required as a cofactor. Requires Zn(2+) as cofactor.

The protein resides in the plastid. Its subcellular location is the chloroplast. The enzyme catalyses RNA(n) + a ribonucleoside 5'-triphosphate = RNA(n+1) + diphosphate. DNA-dependent RNA polymerase catalyzes the transcription of DNA into RNA using the four ribonucleoside triphosphates as substrates. This chain is DNA-directed RNA polymerase subunit beta', found in Thalassiosira pseudonana (Marine diatom).